Reading from the N-terminus, the 502-residue chain is Maturase K (502 aa).

It belongs to the intron maturase 2 family. MatK subfamily.

The protein resides in the plastid. It is found in the chloroplast. In terms of biological role, usually encoded in the trnK tRNA gene intron. Probably assists in splicing its own and other chloroplast group II introns. The protein is Maturase K of Tilia americana (American basswood).